A 436-amino-acid polypeptide reads, in one-letter code: Gamma-glutamyl phosphate reductase (436 aa).

Belongs to the gamma-glutamyl phosphate reductase family.

It localises to the cytoplasm. The catalysed reaction is L-glutamate 5-semialdehyde + phosphate + NADP(+) = L-glutamyl 5-phosphate + NADPH + H(+). It functions in the pathway amino-acid biosynthesis; L-proline biosynthesis; L-glutamate 5-semialdehyde from L-glutamate: step 2/2. Its function is as follows. Catalyzes the NADPH-dependent reduction of L-glutamate 5-phosphate into L-glutamate 5-semialdehyde and phosphate. The product spontaneously undergoes cyclization to form 1-pyrroline-5-carboxylate. The protein is Gamma-glutamyl phosphate reductase of Prochlorococcus marinus (strain MIT 9215).